Consider the following 149-residue polypeptide: Transcriptional repressor NrdR (149 aa).

The segment at 3-34 is a zinc-finger region; it reads CPFCQSDDTKVLDTRLIDDGSQVRRRRECVSC. The region spanning 49–139 is the ATP-cone domain; that stretch reads PHLIKSDDSR…VYRQFQDIEA (91 aa).

Belongs to the NrdR family. Zn(2+) serves as cofactor.

In terms of biological role, negatively regulates transcription of bacterial ribonucleotide reductase nrd genes and operons by binding to NrdR-boxes. In Ruthia magnifica subsp. Calyptogena magnifica, this protein is Transcriptional repressor NrdR.